The primary structure comprises 459 residues: Peptidyl-prolyl cis-trans isomerase FKBP4 (459 aa).

M1 bears the N-acetylmethionine; in peptidyl-prolyl cis-trans isomerase FKBP4; alternate mark. The segment at 1 to 24 (MTAEEMKATESGAQSAPLPMEGVD) is disordered. T2 bears the N-acetylthreonine; in peptidyl-prolyl cis-trans isomerase FKBP4, N-terminally processed; partial mark. The 89-residue stretch at 50–138 (GDRVFVHYTG…VFEVELFEFK (89 aa)) folds into the PPIase FKBP-type 1 domain. T143 carries the post-translational modification Phosphothreonine; by CK2. The PPIase FKBP-type 2 domain occupies 167-253 (GAIVEVALEG…KYELHLKSFE (87 aa)). Y220 carries the post-translational modification Phosphotyrosine. Positions 267-400 (LEQSTIVKER…TQLAVCQQRI (134 aa)) are interaction with tubulin. TPR repeat units follow at residues 270-303 (STIV…LEYE), 319-352 (LASH…DSNN), and 353-386 (EKGL…YPNN). K282 carries the post-translational modification N6-acetyllysine. R373 carries the post-translational modification Omega-N-methylarginine. Positions 421–459 (EENKAKAEASSGDHPTDTEMKEEQKSNTAGSQSQVETEA) are disordered. A compositionally biased stretch (basic and acidic residues) spans 434 to 445 (HPTDTEMKEEQK). Residue T436 is modified to Phosphothreonine. K441 participates in a covalent cross-link: Glycyl lysine isopeptide (Lys-Gly) (interchain with G-Cter in SUMO1). Positions 446-459 (SNTAGSQSQVETEA) are enriched in polar residues. Phosphoserine is present on residues S451 and S453.

As to quaternary structure, homodimer. Interacts with GLMN. Associates with HSP90AA1 and HSP70 in steroid hormone receptor complexes. Also interacts with peroxisomal phytanoyl-CoA alpha-hydroxylase (PHYH). Interacts with NR3C1 and dynein. Interacts with HSF1 in the HSP90 complex. Associates with tubulin. Interacts with MAPT/TAU. Interacts (via TPR domain) with S100A1, S100A2 and S100A6; the interaction is Ca(2+) dependent. Interaction with S100A1 and S100A2 (but not with S100A6) leads to inhibition of FKBP4-HSP90 interaction. Interacts with dynein; causes partially NR3C1 transport to the nucleus. In terms of processing, phosphorylation by CK2 results in loss of HSP90 binding activity. In terms of tissue distribution, widely expressed.

The protein resides in the cytoplasm. It localises to the cytosol. Its subcellular location is the mitochondrion. It is found in the nucleus. The protein localises to the cytoskeleton. The protein resides in the cell projection. It localises to the axon. It catalyses the reaction [protein]-peptidylproline (omega=180) = [protein]-peptidylproline (omega=0). With respect to regulation, inhibited by FK506. Functionally, immunophilin protein with PPIase and co-chaperone activities. Component of steroid receptors heterocomplexes through interaction with heat-shock protein 90 (HSP90). May play a role in the intracellular trafficking of heterooligomeric forms of steroid hormone receptors between cytoplasm and nuclear compartments. The isomerase activity controls neuronal growth cones via regulation of TRPC1 channel opening. Also acts as a regulator of microtubule dynamics by inhibiting MAPT/TAU ability to promote microtubule assembly. May have a protective role against oxidative stress in mitochondria. The chain is Peptidyl-prolyl cis-trans isomerase FKBP4 (FKBP4) from Homo sapiens (Human).